Here is a 493-residue protein sequence, read N- to C-terminus: uncharacterized protein (493 aa).

Ser328 is subject to Phosphoserine. Over residues 466 to 486 the composition is skewed to polar residues; that stretch reads AESNSGRGQNSKTKTTSVNLS. The segment at 466–493 is disordered; the sequence is AESNSGRGQNSKTKTTSVNLSRNKRTRT.

This is an uncharacterized protein from Schizosaccharomyces pombe (strain 972 / ATCC 24843) (Fission yeast).